We begin with the raw amino-acid sequence, 254 residues long: HTH-type transcriptional regulator GolR (254 aa).

Residues 3–58 (PFERQNKIIHLLDQNNKITVPELSRILDVSISTIRNDLSALEESGMIKKVHGGAVL) enclose the HTH deoR-type domain. Residues 20-39 (ITVPELSRILDVSISTIRND) constitute a DNA-binding region (H-T-H motif).

Its function is as follows. Involved in the glycerol metabolism. Repressor of the gol operon for glycerol metabolism. This chain is HTH-type transcriptional regulator GolR, found in Listeria innocua serovar 6a (strain ATCC BAA-680 / CLIP 11262).